Here is a 474-residue protein sequence, read N- to C-terminus: Cysteine--tRNA ligase (474 aa).

Cys-34 is a Zn(2+) binding site. A 'HIGH' region motif is present at residues 36-46 (PTVYDYAHIGN). Residues Cys-219, His-244, and Glu-248 each coordinate Zn(2+). The short motif at 276-280 (KMSKS) is the 'KMSKS' region element. ATP is bound at residue Lys-279.

The protein belongs to the class-I aminoacyl-tRNA synthetase family. Monomer. Zn(2+) is required as a cofactor.

It localises to the cytoplasm. It carries out the reaction tRNA(Cys) + L-cysteine + ATP = L-cysteinyl-tRNA(Cys) + AMP + diphosphate. This is Cysteine--tRNA ligase (cysS) from Chlamydia pneumoniae (Chlamydophila pneumoniae).